Here is a 307-residue protein sequence, read N- to C-terminus: Aspartate carbamoyltransferase catalytic subunit (307 aa).

Arg-59 and Thr-60 together coordinate carbamoyl phosphate. L-aspartate is bound at residue Lys-87. The carbamoyl phosphate site is built by Arg-109, His-137, and Gln-140. 2 residues coordinate L-aspartate: Arg-173 and Arg-223. Residues Gly-266 and Pro-267 each contribute to the carbamoyl phosphate site.

This sequence belongs to the aspartate/ornithine carbamoyltransferase superfamily. ATCase family. In terms of assembly, heterododecamer (2C3:3R2) of six catalytic PyrB chains organized as two trimers (C3), and six regulatory PyrI chains organized as three dimers (R2).

It carries out the reaction carbamoyl phosphate + L-aspartate = N-carbamoyl-L-aspartate + phosphate + H(+). It functions in the pathway pyrimidine metabolism; UMP biosynthesis via de novo pathway; (S)-dihydroorotate from bicarbonate: step 2/3. Functionally, catalyzes the condensation of carbamoyl phosphate and aspartate to form carbamoyl aspartate and inorganic phosphate, the committed step in the de novo pyrimidine nucleotide biosynthesis pathway. The polypeptide is Aspartate carbamoyltransferase catalytic subunit (Helicobacter pylori (strain G27)).